The sequence spans 296 residues: Protoheme IX farnesyltransferase (296 aa).

9 helical membrane-spanning segments follow: residues 11-31, 35-55, 84-104, 107-127, 132-152, 162-182, 208-228, 229-249, and 264-284; these read PGII…AAQG, YPLF…GCVF, VTLV…YIAA, LAMW…SLYM, VYGT…GYCA, LILL…IAIF, ITLY…GGYA, GYKY…MALS, and LFVF…VDSM.

The protein belongs to the UbiA prenyltransferase family. Protoheme IX farnesyltransferase subfamily.

It localises to the cell inner membrane. It carries out the reaction heme b + (2E,6E)-farnesyl diphosphate + H2O = Fe(II)-heme o + diphosphate. Its pathway is porphyrin-containing compound metabolism; heme O biosynthesis; heme O from protoheme: step 1/1. Its function is as follows. Converts heme B (protoheme IX) to heme O by substitution of the vinyl group on carbon 2 of heme B porphyrin ring with a hydroxyethyl farnesyl side group. The sequence is that of Protoheme IX farnesyltransferase from Pectobacterium carotovorum subsp. carotovorum (strain PC1).